Here is a 284-residue protein sequence, read N- to C-terminus: L-ribulose-5-phosphate 3-epimerase UlaE (284 aa).

It belongs to the L-ribulose-5-phosphate 3-epimerase family.

The catalysed reaction is L-ribulose 5-phosphate = L-xylulose 5-phosphate. It functions in the pathway cofactor degradation; L-ascorbate degradation; D-xylulose 5-phosphate from L-ascorbate: step 3/4. Functionally, catalyzes the isomerization of L-xylulose-5-phosphate to L-ribulose-5-phosphate. Is involved in the anaerobic L-ascorbate utilization. The chain is L-ribulose-5-phosphate 3-epimerase UlaE from Shigella boydii serotype 18 (strain CDC 3083-94 / BS512).